We begin with the raw amino-acid sequence, 423 residues long: Citrate synthase-like protein clz17 (423 aa).

Active-site residues include His-357 and Asp-413.

This sequence belongs to the citrate synthase family.

It functions in the pathway secondary metabolite biosynthesis. In terms of biological role, citrate synthase-like protein; part of the gene cluster that mediates the biosynthesis of squalestatin S1 (SQS1, also known as zaragozic acid A), a heavily oxidized fungal polyketide that offers potent cholesterol lowering activity by targeting squalene synthase (SS). SQS1 is composed of a 2,8-dioxobicyclic[3.2.1]octane-3,4,5-tricarboxyclic acid core that is connected to two lipophilic polyketide arms. These initial steps feature the priming of an unusual benzoic acid starter unit onto the highly reducing polyketide synthase clz14, followed by oxaloacetate extension and product release to generate a tricarboxylic acid containing product. The phenylalanine ammonia lyase (PAL) clz10 and the acyl-CoA ligase clz12 are involved in transforming phenylalanine into benzoyl-CoA. The citrate synthase-like protein clz17 is involved in connecting the C-alpha-carbons of the hexaketide chain and oxaloacetate to afford the tricarboxylic acid unit. The potential hydrolytic enzymes, clz11 and clz13, are in close proximity to pks2 and may participate in product release. On the other side, the tetraketide arm is synthesized by a the squalestatin tetraketide synthase clz2 and enzymatically esterified to the core in the last biosynthetic step, by the acetyltransferase clz6. The biosynthesis of the tetraketide must involve 3 rounds of chain extension. After the first and second rounds methyl-transfer occurs, and in all rounds of extension the ketoreductase and dehydratase are active. The enoyl reductase and C-MeT of clz2 are not active in the final round of extension. The acetyltransferase clz6 appears to have a broad substrate selectivity for its acyl CoA substrate, allowing the in vitro synthesis of novel squalestatins. The biosynthesis of SQS1 requires several oxidative steps likely performed by oxidoreductases clz3, clz15 and clz16. Finally, in support of the identification of the cluster as being responsible for SQS1 production, the cluster contains a gene encoding a putative squalene synthase (SS) clz20, suggesting a likely mechanism for self-resistance. The sequence is that of Citrate synthase-like protein clz17 from Cochliobolus lunatus (Filamentous fungus).